We begin with the raw amino-acid sequence, 222 residues long: UPF0502 protein XAC4278 (222 aa).

The protein belongs to the UPF0502 family.

This is UPF0502 protein XAC4278 from Xanthomonas axonopodis pv. citri (strain 306).